We begin with the raw amino-acid sequence, 382 residues long: MTSAPRPRPTLDDLPLREDLRGKSPYGASQLAVPVRLSTNENPHPPTQALVDDVVRSVGEAAVDLHRYPDRDAVALRTDLANYLTAQTGTRIGFENVWAANGSNEILQQLLQAFGGPGRTAIGFVPSYSMHPIISDGTHTEWVETARADGFGLDIDAAIAVVSDRRPDVVFITSPNNPTGQSVSLTELRRLLDVVPGILIVDEAYGEFSSQPSAVGLIEEYPTRVVVTRTMSKAFAFAGGRLGYLVATPALIDALLLVRLPYHLSSVTQVAARAALRHAQDTLGSVATLIAERERVSKKLASMGFRVIPSDANFVLFGEFADAPAAWQRYLDQGVLIRDVGIPGYLRATTGLADENDAFLRASARIAATDLAPAAASPVGAP.

The disordered stretch occupies residues 1–24; it reads MTSAPRPRPTLDDLPLREDLRGKS. Residues 9–22 show a composition bias toward basic and acidic residues; sequence PTLDDLPLREDLRG. Position 233 is an N6-(pyridoxal phosphate)lysine (lysine 233).

This sequence belongs to the class-II pyridoxal-phosphate-dependent aminotransferase family. Histidinol-phosphate aminotransferase subfamily. Homodimer. The cofactor is pyridoxal 5'-phosphate.

It carries out the reaction L-histidinol phosphate + 2-oxoglutarate = 3-(imidazol-4-yl)-2-oxopropyl phosphate + L-glutamate. It functions in the pathway amino-acid biosynthesis; L-histidine biosynthesis; L-histidine from 5-phospho-alpha-D-ribose 1-diphosphate: step 7/9. The chain is Histidinol-phosphate aminotransferase from Mycobacterium ulcerans (strain Agy99).